The chain runs to 284 residues: NAD kinase (284 aa).

Catalysis depends on Asp-70, which acts as the Proton acceptor. Residues 70 to 71, 139 to 140, Lys-167, Asp-169, Leu-177, 180 to 185, and Gln-236 contribute to the NAD(+) site; these read DG, NE, and TAYNLS.

The protein belongs to the NAD kinase family. The cofactor is a divalent metal cation.

The protein localises to the cytoplasm. It catalyses the reaction NAD(+) + ATP = ADP + NADP(+) + H(+). Its function is as follows. Involved in the regulation of the intracellular balance of NAD and NADP, and is a key enzyme in the biosynthesis of NADP. Catalyzes specifically the phosphorylation on 2'-hydroxyl of the adenosine moiety of NAD to yield NADP. The protein is NAD kinase of Helicobacter pylori (strain HPAG1).